Here is a 200-residue protein sequence, read N- to C-terminus: Probable GTP-binding protein EngB (200 aa).

Residues 24 to 199 enclose the EngB-type G domain; sequence EGAEVAFAGR…RGVIGGWLGL (176 aa). GTP-binding positions include 32 to 39, 59 to 63, 77 to 80, 144 to 147, and 178 to 180; these read GRSNAGKS, GRTQQ, DLPG, TKAD, and FSG. Mg(2+) is bound by residues Ser39 and Thr61.

Belongs to the TRAFAC class TrmE-Era-EngA-EngB-Septin-like GTPase superfamily. EngB GTPase family. Requires Mg(2+) as cofactor.

Its function is as follows. Necessary for normal cell division and for the maintenance of normal septation. The chain is Probable GTP-binding protein EngB from Stenotrophomonas maltophilia (strain K279a).